Consider the following 635-residue polypeptide: Chaperone protein HtpG (635 aa).

An a; substrate-binding region spans residues 1–343 (MSVETQKETL…SNDLSLNVSR (343 aa)). Residues 344 to 560 (EILQKDPIID…EQDMGLQMRQ (217 aa)) form a b region. The tract at residues 561-635 (ILEASGQKVP…LNKLLVELSV (75 aa)) is c.

The protein belongs to the heat shock protein 90 family. As to quaternary structure, homodimer.

It localises to the cytoplasm. Its function is as follows. Molecular chaperone. Has ATPase activity. This is Chaperone protein HtpG from Pseudomonas syringae pv. tomato (strain ATCC BAA-871 / DC3000).